Reading from the N-terminus, the 115-residue chain is T cell receptor beta variable 18 (115 aa).

The first 21 residues, 1–21 (MDTRLLCCAVICLLGAGLSNA), serve as a signal peptide directing secretion. Positions 22-115 (GVMQNPRHLV…SAAYFCASSP (94 aa)) constitute an Ig-like domain. Cysteine 42 and cysteine 111 are oxidised to a cystine.

In terms of assembly, alpha-beta TR is a heterodimer composed of an alpha and beta chain; disulfide-linked. The alpha-beta TR is associated with the transmembrane signaling CD3 coreceptor proteins to form the TR-CD3 (TcR or TCR). The assembly of alpha-beta TR heterodimers with CD3 occurs in the endoplasmic reticulum where a single alpha-beta TR heterodimer associates with one CD3D-CD3E heterodimer, one CD3G-CD3E heterodimer and one CD247 homodimer forming a stable octameric structure. CD3D-CD3E and CD3G-CD3E heterodimers preferentially associate with TR alpha and TR beta chains, respectively. The association of the CD247 homodimer is the last step of TcR assembly in the endoplasmic reticulum and is required for transport to the cell surface.

It is found in the cell membrane. V region of the variable domain of T cell receptor (TR) beta chain that participates in the antigen recognition. Alpha-beta T cell receptors are antigen specific receptors which are essential to the immune response and are present on the cell surface of T lymphocytes. Recognize peptide-major histocompatibility (MH) (pMH) complexes that are displayed by antigen presenting cells (APC), a prerequisite for efficient T cell adaptive immunity against pathogens. Binding of alpha-beta TR to pMH complex initiates TR-CD3 clustering on the cell surface and intracellular activation of LCK that phosphorylates the ITAM motifs of CD3G, CD3D, CD3E and CD247 enabling the recruitment of ZAP70. In turn ZAP70 phosphorylates LAT, which recruits numerous signaling molecules to form the LAT signalosome. The LAT signalosome propagates signal branching to three major signaling pathways, the calcium, the mitogen-activated protein kinase (MAPK) kinase and the nuclear factor NF-kappa-B (NF-kB) pathways, leading to the mobilization of transcription factors that are critical for gene expression and essential for T cell growth and differentiation. The T cell repertoire is generated in the thymus, by V-(D)-J rearrangement. This repertoire is then shaped by intrathymic selection events to generate a peripheral T cell pool of self-MH restricted, non-autoaggressive T cells. Post-thymic interaction of alpha-beta TR with the pMH complexes shapes TR structural and functional avidity. This is T cell receptor beta variable 18 from Homo sapiens (Human).